A 414-amino-acid chain; its full sequence is MTQANLSETLFKPRFKHPETSTLVRRFSHGAQLPVQSALDGKTIPHWYRMINRLMWIWRGIDPREILDVQARIVMSDAERTDDDLYDTVIGYRGGNWIYEWATQAMVWQQKACAEEDPQLSGRHWLHAATLYNIAAYPHLKGDDLAEQAQALSNRAYEEAAQRLPGTMRQMEFTVPGGAPITGFLHMPKGDGPFPTVLMCGGLDAMQTDYYSLYERYFAPRGIAMLTIDMPSVGFSSKWKLTQDSSLLHQHVLKALPNVPWVDHTRVAAFGFRFGANVAVRLAYLESPRLKVVACLGPVVHTLLSDFKCQQQVPEMYLDVLASRLGMHDASDEALRVELNRYSLKVQGLLGRRCPTPMLSGYWKNDPFSPEEDSRLITSSSADGKLLEIPFNPVYRNFDKGLQEITDWIEKRLC.

This sequence belongs to the FrsA family.

The enzyme catalyses a carboxylic ester + H2O = an alcohol + a carboxylate + H(+). In terms of biological role, catalyzes the hydrolysis of esters. This chain is Esterase FrsA, found in Escherichia coli O81 (strain ED1a).